We begin with the raw amino-acid sequence, 291 residues long: Protein CMSS1 (291 aa).

The tract at residues 1-96 (MADDLGDEWW…KKTITDVLTS (96 aa)) is disordered. The span at 17–27 (DVPEVEEETEH) shows a compositional bias: acidic residues. The segment covering 58–79 (VKKECFITQERSEEKPDNESNK) has biased composition (basic and acidic residues).

The protein belongs to the CMS1 family.

The protein is Protein CMSS1 (cmss1) of Danio rerio (Zebrafish).